The chain runs to 493 residues: DM7 family protein GM11958 (493 aa).

Positions A434–I493 are disordered. Over residues L457–E483 the composition is skewed to acidic residues.

It belongs to the DM7 family.

The chain is DM7 family protein GM11958 from Drosophila sechellia (Fruit fly).